Consider the following 295-residue polypeptide: Deoxyuridine 5'-triphosphate nucleotidohydrolase (295 aa).

A substrate-binding site is contributed by 178–180; that stretch reads RSG. Over residues 260–272 the composition is skewed to basic and acidic residues; sequence NSVRKHTHEDNPV. Residues 260–295 are disordered; it reads NSVRKHTHEDNPVHEPNVATASADIRGTKGLGSSGF.

This sequence belongs to the dUTPase family. Mg(2+) is required as a cofactor.

It catalyses the reaction dUTP + H2O = dUMP + diphosphate + H(+). Its function is as follows. Involved in nucleotide metabolism: produces dUMP, the immediate precursor of thymidine nucleotides and decreases the intracellular concentration of dUTP to avoid uracil incorporation into viral DNA. In Human herpesvirus 8 type P (isolate GK18) (HHV-8), this protein is Deoxyuridine 5'-triphosphate nucleotidohydrolase.